The following is a 547-amino-acid chain: Chaperonin GroEL (547 aa).

Residues T30–P33, K51, D87–T91, G415, and D496 contribute to the ATP site. A disordered region spans residues K527–F547. The segment covering P534–F547 has biased composition (gly residues).

Belongs to the chaperonin (HSP60) family. Forms a cylinder of 14 subunits composed of two heptameric rings stacked back-to-back. Interacts with the co-chaperonin GroES.

The protein localises to the cytoplasm. The enzyme catalyses ATP + H2O + a folded polypeptide = ADP + phosphate + an unfolded polypeptide.. Functionally, together with its co-chaperonin GroES, plays an essential role in assisting protein folding. The GroEL-GroES system forms a nano-cage that allows encapsulation of the non-native substrate proteins and provides a physical environment optimized to promote and accelerate protein folding. The sequence is that of Chaperonin GroEL from Methylocella silvestris (strain DSM 15510 / CIP 108128 / LMG 27833 / NCIMB 13906 / BL2).